A 266-amino-acid polypeptide reads, in one-letter code: Thymidylate synthase (266 aa).

DUMP contacts are provided by residues Arg20 and 129–130; that span reads RR. Residue Cys149 is the Nucleophile of the active site. DUMP is bound by residues 169-172, Asn180, and 210-212; these read RSCD and HVY. Asp172 is a (6R)-5,10-methylene-5,6,7,8-tetrahydrofolate binding site. Ala265 contributes to the (6R)-5,10-methylene-5,6,7,8-tetrahydrofolate binding site.

Belongs to the thymidylate synthase family. Bacterial-type ThyA subfamily. In terms of assembly, homodimer.

The protein resides in the cytoplasm. It carries out the reaction dUMP + (6R)-5,10-methylene-5,6,7,8-tetrahydrofolate = 7,8-dihydrofolate + dTMP. The protein operates within pyrimidine metabolism; dTTP biosynthesis. In terms of biological role, catalyzes the reductive methylation of 2'-deoxyuridine-5'-monophosphate (dUMP) to 2'-deoxythymidine-5'-monophosphate (dTMP) while utilizing 5,10-methylenetetrahydrofolate (mTHF) as the methyl donor and reductant in the reaction, yielding dihydrofolate (DHF) as a by-product. This enzymatic reaction provides an intracellular de novo source of dTMP, an essential precursor for DNA biosynthesis. The sequence is that of Thymidylate synthase from Bifidobacterium longum (strain NCC 2705).